Consider the following 439-residue polypeptide: 3-phosphoshikimate 1-carboxyvinyltransferase (439 aa).

Residues Lys21, Ser22, and Arg26 each coordinate 3-phosphoshikimate. Lys21 contacts phosphoenolpyruvate. Phosphoenolpyruvate-binding residues include Gly94 and Arg122. Ser167, Gln169, Asp320, and Lys347 together coordinate 3-phosphoshikimate. Gln169 lines the phosphoenolpyruvate pocket. The active-site Proton acceptor is Asp320. Positions 351 and 395 each coordinate phosphoenolpyruvate.

The protein belongs to the EPSP synthase family. In terms of assembly, monomer.

The protein localises to the cytoplasm. It carries out the reaction 3-phosphoshikimate + phosphoenolpyruvate = 5-O-(1-carboxyvinyl)-3-phosphoshikimate + phosphate. The protein operates within metabolic intermediate biosynthesis; chorismate biosynthesis; chorismate from D-erythrose 4-phosphate and phosphoenolpyruvate: step 6/7. Functionally, catalyzes the transfer of the enolpyruvyl moiety of phosphoenolpyruvate (PEP) to the 5-hydroxyl of shikimate-3-phosphate (S3P) to produce enolpyruvyl shikimate-3-phosphate and inorganic phosphate. This chain is 3-phosphoshikimate 1-carboxyvinyltransferase, found in Hyphomonas neptunium (strain ATCC 15444).